Here is a 240-residue protein sequence, read N- to C-terminus: Uridylate kinase (240 aa).

12–15 (KLSG) contacts ATP. An involved in allosteric activation by GTP region spans residues 20 to 25 (GEQGFG). A UMP-binding site is contributed by Gly54. ATP-binding residues include Gly55 and Arg59. Residues Asp74 and 135–142 (TGNPYFST) each bind UMP. The ATP site is built by Asn163, Tyr169, and Asp172.

Belongs to the UMP kinase family. Homohexamer.

Its subcellular location is the cytoplasm. The enzyme catalyses UMP + ATP = UDP + ADP. Its pathway is pyrimidine metabolism; CTP biosynthesis via de novo pathway; UDP from UMP (UMPK route): step 1/1. Allosterically activated by GTP. Inhibited by UTP. In terms of biological role, catalyzes the reversible phosphorylation of UMP to UDP. The sequence is that of Uridylate kinase from Bacillus anthracis.